The chain runs to 309 residues: Phytoene synthase (309 aa).

The protein belongs to the phytoene/squalene synthase family.

The enzyme catalyses 2 (2E,6E,10E)-geranylgeranyl diphosphate = 15-cis-phytoene + 2 diphosphate. It participates in carotenoid biosynthesis; phytoene biosynthesis; all-trans-phytoene from geranylgeranyl diphosphate: step 1/1. Catalyzes the reaction from prephytoene diphosphate to phytoene. The polypeptide is Phytoene synthase (crtB) (Arthrospira platensis (Spirulina platensis)).